A 146-amino-acid polypeptide reads, in one-letter code: [Ribosomal protein bS18]-alanine N-acetyltransferase (146 aa).

One can recognise an N-acetyltransferase domain in the interval 2–146; the sequence is SIISQIEACD…ENAVVMACYL (145 aa). 69–71 provides a ligand contact to acetyl-CoA; it reads IAI. The active-site Proton acceptor is the Glu103. Asn108 is an acetyl-CoA binding site. The active-site Proton donor is the Tyr114.

The protein belongs to the acetyltransferase family. RimI subfamily.

It is found in the cytoplasm. The catalysed reaction is N-terminal L-alanyl-[ribosomal protein bS18] + acetyl-CoA = N-terminal N(alpha)-acetyl-L-alanyl-[ribosomal protein bS18] + CoA + H(+). Its function is as follows. Acetylates the N-terminal alanine of ribosomal protein bS18. The chain is [Ribosomal protein bS18]-alanine N-acetyltransferase from Haemophilus influenzae (strain ATCC 51907 / DSM 11121 / KW20 / Rd).